Reading from the N-terminus, the 201-residue chain is Small ribosomal subunit protein uS4c (201 aa).

The interval 17–44 (ALPGLTNKKPRTGSDLRNQSRSGKKSQY) is disordered. An S4 RNA-binding domain is found at 89-149 (MRLDNILFRL…DEQKSRALIQ (61 aa)).

The protein belongs to the universal ribosomal protein uS4 family. In terms of assembly, part of the 30S ribosomal subunit. Contacts protein S5. The interaction surface between S4 and S5 is involved in control of translational fidelity.

Its subcellular location is the plastid. The protein localises to the chloroplast. Functionally, one of the primary rRNA binding proteins, it binds directly to 16S rRNA where it nucleates assembly of the body of the 30S subunit. Its function is as follows. With S5 and S12 plays an important role in translational accuracy. This chain is Small ribosomal subunit protein uS4c (rps4), found in Atropa belladonna (Belladonna).